The primary structure comprises 100 residues: NADH-quinone oxidoreductase subunit K (100 aa).

3 helical membrane passes run 2–22 (VTLNHYLILSSLLFMIGLVGV), 28–48 (LLMLFFSTEIMLNAVNVGLVA), and 63–83 (FFIIAVAASEVAVGLGLLILW).

The protein belongs to the complex I subunit 4L family. As to quaternary structure, NDH-1 is composed of 14 different subunits. Subunits NuoA, H, J, K, L, M, N constitute the membrane sector of the complex.

The protein resides in the cell inner membrane. The catalysed reaction is a quinone + NADH + 5 H(+)(in) = a quinol + NAD(+) + 4 H(+)(out). Functionally, NDH-1 shuttles electrons from NADH, via FMN and iron-sulfur (Fe-S) centers, to quinones in the respiratory chain. The immediate electron acceptor for the enzyme in this species is believed to be ubiquinone. Couples the redox reaction to proton translocation (for every two electrons transferred, four hydrogen ions are translocated across the cytoplasmic membrane), and thus conserves the redox energy in a proton gradient. The sequence is that of NADH-quinone oxidoreductase subunit K from Wolinella succinogenes (strain ATCC 29543 / DSM 1740 / CCUG 13145 / JCM 31913 / LMG 7466 / NCTC 11488 / FDC 602W) (Vibrio succinogenes).